Here is a 123-residue protein sequence, read N- to C-terminus: Large ribosomal subunit protein uL14 (123 aa).

It belongs to the universal ribosomal protein uL14 family. Part of the 50S ribosomal subunit. Forms a cluster with proteins L3 and L19. In the 70S ribosome, L14 and L19 interact and together make contacts with the 16S rRNA in bridges B5 and B8.

Its function is as follows. Binds to 23S rRNA. Forms part of two intersubunit bridges in the 70S ribosome. The chain is Large ribosomal subunit protein uL14 from Vibrio cholerae serotype O1 (strain ATCC 39541 / Classical Ogawa 395 / O395).